Here is a 118-residue protein sequence, read N- to C-terminus: Small ribosomal subunit protein uS11 (118 aa).

This sequence belongs to the universal ribosomal protein uS11 family. Part of the 30S ribosomal subunit. Interacts with proteins S7 and S18. Binds to IF-3.

Its function is as follows. Located on the platform of the 30S subunit, it bridges several disparate RNA helices of the 16S rRNA. Forms part of the Shine-Dalgarno cleft in the 70S ribosome. In Carsonella ruddii (strain PV), this protein is Small ribosomal subunit protein uS11.